The sequence spans 247 residues: MyoD family inhibitor domain-containing protein (247 aa).

2 disordered regions span residues Met1–Ala67 and Gln80–Ile110. One can recognise an MDFI domain in the interval Gln74–Ser247. Phosphoserine is present on residues Ser129 and Ser141.

Belongs to the MDFI family. As to quaternary structure, interacts with HAND1; the interaction sequesters Hand1 into the nucleolus and inhibits its activity. Interacts (via C-terminus) with ZIC2. Interacts (via C-terminus) with AXIN1, the histidine-rich region of CCNT1/cyclin-T and weakly with LEF1. Interacts with CCNT2. Interacts with GATA2. Interacts (via C-terminus) with Piezo channel composed of PIEZO1 or PIEZO2; the interaction prolongs Piezo channel inactivation. In terms of processing, palmitoylated. In terms of tissue distribution, in the embryo, robust expression is detected between 16.5 and 18.5 dpc in lung, kidney, and salivary glands. In the developing cardiovascular system, it is detected in lymphatic and cardiac valves (at protein level).

Its subcellular location is the cytoplasm. It localises to the secreted. In terms of biological role, required to control the activity of various transcription factors through their sequestration in the cytoplasm. Retains nuclear Zic proteins ZIC1, ZIC2 and ZIC3 in the cytoplasm and inhibits their transcriptional activation. Modulates the expression from cellular promoters. Binds to the axin complex, resulting in an increase in the level of free beta-catenin. Affects axin-regulation of the WNT and JNK signaling pathways. Involved in the development of lymphatic vessel valves. Required to promote lymphatic endothelial cell migration, in a process that involves down-regulation of integrin beta 1 activation and control of cell adhesion to the extracellular matrix. Regulates the activity of mechanosensitive Piezo channel. The polypeptide is MyoD family inhibitor domain-containing protein (Mus musculus (Mouse)).